Consider the following 361-residue polypeptide: Phospho-N-acetylmuramoyl-pentapeptide-transferase (361 aa).

The next 10 helical transmembrane spans lie at 28-48 (LSMFTSMFVVLLIGTPFIKFF), 70-90 (IGTPTMGGVLILLGLFSGILL), 94-114 (LSNYHIWFLLFIVSGFGLLGA), 129-149 (VSFKFKIISQILIAIVGIYGL), 169-189 (LIINLGWFFIPFSIFIIVGSS), 205-225 (PVILVAACFAFISYVTGNIVF), 237-257 (MGEVSVFCGSIIGACLGFLWF), 264-284 (IFMGDTGSLALGGSLGAIGII), 289-309 (IVLAITGGLFVLEAVSVIIQV), and 338-358 (TVVIRFWIISIILAMIGLATL).

The protein belongs to the glycosyltransferase 4 family. MraY subfamily. Requires Mg(2+) as cofactor.

It is found in the cell inner membrane. It carries out the reaction UDP-N-acetyl-alpha-D-muramoyl-L-alanyl-gamma-D-glutamyl-meso-2,6-diaminopimeloyl-D-alanyl-D-alanine + di-trans,octa-cis-undecaprenyl phosphate = di-trans,octa-cis-undecaprenyl diphospho-N-acetyl-alpha-D-muramoyl-L-alanyl-D-glutamyl-meso-2,6-diaminopimeloyl-D-alanyl-D-alanine + UMP. The protein operates within cell wall biogenesis; peptidoglycan biosynthesis. In terms of biological role, catalyzes the initial step of the lipid cycle reactions in the biosynthesis of the cell wall peptidoglycan: transfers peptidoglycan precursor phospho-MurNAc-pentapeptide from UDP-MurNAc-pentapeptide onto the lipid carrier undecaprenyl phosphate, yielding undecaprenyl-pyrophosphoryl-MurNAc-pentapeptide, known as lipid I. The polypeptide is Phospho-N-acetylmuramoyl-pentapeptide-transferase (Pelagibacter ubique (strain HTCC1062)).